The following is a 342-amino-acid chain: Phosphate acyltransferase (342 aa).

Belongs to the PlsX family. Homodimer. Probably interacts with PlsY.

It localises to the cytoplasm. It carries out the reaction a fatty acyl-[ACP] + phosphate = an acyl phosphate + holo-[ACP]. It functions in the pathway lipid metabolism; phospholipid metabolism. Catalyzes the reversible formation of acyl-phosphate (acyl-PO(4)) from acyl-[acyl-carrier-protein] (acyl-ACP). This enzyme utilizes acyl-ACP as fatty acyl donor, but not acyl-CoA. The polypeptide is Phosphate acyltransferase (Shewanella pealeana (strain ATCC 700345 / ANG-SQ1)).